Here is a 209-residue protein sequence, read N- to C-terminus: dITP/XTP pyrophosphatase (209 aa).

22-27 (SHNQGK) lines the substrate pocket. Asp83 (proton acceptor) is an active-site residue. A Mg(2+)-binding site is contributed by Asp83. Substrate contacts are provided by residues Ser84, 167–170 (FGYD), Lys190, and 195–196 (HR).

The protein belongs to the HAM1 NTPase family. Homodimer. It depends on Mg(2+) as a cofactor.

It carries out the reaction XTP + H2O = XMP + diphosphate + H(+). The enzyme catalyses dITP + H2O = dIMP + diphosphate + H(+). It catalyses the reaction ITP + H2O = IMP + diphosphate + H(+). Pyrophosphatase that catalyzes the hydrolysis of nucleoside triphosphates to their monophosphate derivatives, with a high preference for the non-canonical purine nucleotides XTP (xanthosine triphosphate), dITP (deoxyinosine triphosphate) and ITP. Seems to function as a house-cleaning enzyme that removes non-canonical purine nucleotides from the nucleotide pool, thus preventing their incorporation into DNA/RNA and avoiding chromosomal lesions. This Zymomonas mobilis subsp. mobilis (strain ATCC 31821 / ZM4 / CP4) protein is dITP/XTP pyrophosphatase.